The following is a 46-amino-acid chain: PhoP/PhoQ regulator MgrB (46 aa).

The helical transmembrane segment at 6 to 26 (WVALVVVVLACLLLWAQVFNM) threads the bilayer.

The protein belongs to the MgrB family. As to quaternary structure, may form homooligomers. Probably interacts with the periplasmic domain of PhoQ.

It is found in the cell inner membrane. PhoP-regulated transcription is redox-sensitive, being activated when the periplasm becomes more reducing. MgrB acts between DsbA/DsbB and PhoP/PhoQ in this pathway. Represses PhoP/PhoQ signaling, possibly by binding to the periplasmic domain of PhoQ, altering its activity and that of downstream effector PhoP. This chain is PhoP/PhoQ regulator MgrB, found in Escherichia coli O6:K15:H31 (strain 536 / UPEC).